The following is a 274-amino-acid chain: Thiazole synthase (274 aa).

The active-site Schiff-base intermediate with DXP is K115. 1-deoxy-D-xylulose 5-phosphate-binding positions include G176, 202-203 (AG), and 224-225 (NS).

This sequence belongs to the ThiG family. Homotetramer. Forms heterodimers with either ThiH or ThiS.

Its subcellular location is the cytoplasm. The enzyme catalyses [ThiS sulfur-carrier protein]-C-terminal-Gly-aminoethanethioate + 2-iminoacetate + 1-deoxy-D-xylulose 5-phosphate = [ThiS sulfur-carrier protein]-C-terminal Gly-Gly + 2-[(2R,5Z)-2-carboxy-4-methylthiazol-5(2H)-ylidene]ethyl phosphate + 2 H2O + H(+). It participates in cofactor biosynthesis; thiamine diphosphate biosynthesis. Catalyzes the rearrangement of 1-deoxy-D-xylulose 5-phosphate (DXP) to produce the thiazole phosphate moiety of thiamine. Sulfur is provided by the thiocarboxylate moiety of the carrier protein ThiS. In vitro, sulfur can be provided by H(2)S. This is Thiazole synthase from Psychrobacter arcticus (strain DSM 17307 / VKM B-2377 / 273-4).